The following is a 285-amino-acid chain: Shikimate dehydrogenase (NADP(+)) (285 aa).

Shikimate contacts are provided by residues 19–21 (SLS) and T66. The Proton acceptor role is filled by K70. Shikimate contacts are provided by N91 and D107. Residues 129-133 (GSGGA) and L228 each bind NADP(+). Residue Y230 coordinates shikimate. An NADP(+)-binding site is contributed by G251.

This sequence belongs to the shikimate dehydrogenase family. As to quaternary structure, homodimer.

It catalyses the reaction shikimate + NADP(+) = 3-dehydroshikimate + NADPH + H(+). Its pathway is metabolic intermediate biosynthesis; chorismate biosynthesis; chorismate from D-erythrose 4-phosphate and phosphoenolpyruvate: step 4/7. Functionally, involved in the biosynthesis of the chorismate, which leads to the biosynthesis of aromatic amino acids. Catalyzes the reversible NADPH linked reduction of 3-dehydroshikimate (DHSA) to yield shikimate (SA). This chain is Shikimate dehydrogenase (NADP(+)), found in Prochlorococcus marinus (strain MIT 9515).